The sequence spans 299 residues: Protoheme IX farnesyltransferase (299 aa).

8 consecutive transmembrane segments (helical) span residues 25–45 (IVSL…PDLA), 51–71 (LFGT…NHLI), 97–117 (ALAF…FLVN), 119–139 (LTAW…TAFL), 147–167 (IVLG…AVTG), 173–193 (AFLL…ALAL), 225–245 (FLLF…LLYL), and 275–295 (FGYS…DHYL).

Belongs to the UbiA prenyltransferase family. Protoheme IX farnesyltransferase subfamily.

Its subcellular location is the cell inner membrane. It catalyses the reaction heme b + (2E,6E)-farnesyl diphosphate + H2O = Fe(II)-heme o + diphosphate. Its pathway is porphyrin-containing compound metabolism; heme O biosynthesis; heme O from protoheme: step 1/1. In terms of biological role, converts heme B (protoheme IX) to heme O by substitution of the vinyl group on carbon 2 of heme B porphyrin ring with a hydroxyethyl farnesyl side group. The chain is Protoheme IX farnesyltransferase from Nitrosococcus oceani (strain ATCC 19707 / BCRC 17464 / JCM 30415 / NCIMB 11848 / C-107).